A 490-amino-acid polypeptide reads, in one-letter code: B3 domain-containing protein REM14 (490 aa).

DNA-binding regions (TF-B3) lie at residues 3 to 95 (NQHF…LGPS), 130 to 226 (CFSA…LPKG), and 236 to 333 (CFVA…LSNE). Residues 343 to 367 (NEVESLSTDQESHEESSHNEKISRR) are disordered. Residues 352–364 (QESHEESSHNEKI) show a composition bias toward basic and acidic residues. The segment at residues 387–484 (FVTLNLTPYN…TSCVLKFCSK (98 aa)) is a DNA-binding region (TF-B3 4).

It is found in the nucleus. The protein is B3 domain-containing protein REM14 (REM14) of Arabidopsis thaliana (Mouse-ear cress).